The sequence spans 64 residues: MPKMKSHRGACKRFKKTASGKVKRERMYGSHNLEKKNRKRTRRLHQSTLVDSTQEKQIKRMILA.

Residues 1-24 show a composition bias toward basic residues; that stretch reads MPKMKSHRGACKRFKKTASGKVKR. A disordered region spans residues 1–64; sequence MPKMKSHRGA…EKQIKRMILA (64 aa). Basic and acidic residues predominate over residues 25-35; the sequence is ERMYGSHNLEK. Basic residues predominate over residues 36–45; sequence KNRKRTRRLH.

It belongs to the bacterial ribosomal protein bL35 family.

This is Large ribosomal subunit protein bL35 from Prosthecochloris aestuarii (strain DSM 271 / SK 413).